Reading from the N-terminus, the 317-residue chain is Ribosomal protein L11 methyltransferase (317 aa).

Residues Thr158, Gly179, Asp201, and Asn244 each coordinate S-adenosyl-L-methionine.

The protein belongs to the methyltransferase superfamily. PrmA family.

It localises to the cytoplasm. It carries out the reaction L-lysyl-[protein] + 3 S-adenosyl-L-methionine = N(6),N(6),N(6)-trimethyl-L-lysyl-[protein] + 3 S-adenosyl-L-homocysteine + 3 H(+). In terms of biological role, methylates ribosomal protein L11. This chain is Ribosomal protein L11 methyltransferase, found in Streptococcus equi subsp. equi (strain 4047).